A 594-amino-acid chain; its full sequence is Isocitrate dehydrogenase kinase/phosphatase (594 aa).

ATP-binding positions include 315 to 321 (APGIRGM) and Lys336. Residue Asp371 is part of the active site.

It belongs to the AceK family.

It is found in the cytoplasm. It catalyses the reaction L-seryl-[isocitrate dehydrogenase] + ATP = O-phospho-L-seryl-[isocitrate dehydrogenase] + ADP + H(+). Bifunctional enzyme which can phosphorylate or dephosphorylate isocitrate dehydrogenase (IDH) on a specific serine residue. This is a regulatory mechanism which enables bacteria to bypass the Krebs cycle via the glyoxylate shunt in response to the source of carbon. When bacteria are grown on glucose, IDH is fully active and unphosphorylated, but when grown on acetate or ethanol, the activity of IDH declines drastically concomitant with its phosphorylation. This Klebsiella pneumoniae (strain 342) protein is Isocitrate dehydrogenase kinase/phosphatase.